The chain runs to 458 residues: Flap endonuclease 1 (458 aa).

An N-domain region spans residues 1-105; it reads MGIKGLTGLL…GVLSKRFEKR (105 aa). Asp34 contacts Mg(2+). Arg47 and Arg71 together coordinate DNA. The Mg(2+) site is built by Asp87, Glu159, Glu161, Asp180, and Asp182. The interval 123 to 254 is I-domain; sequence DVDRFSRRTV…KSALKLIREF (132 aa). Glu159 is a binding site for DNA. 2 residues coordinate DNA: Gly232 and Asp234. Residue Asp234 coordinates Mg(2+). 2 disordered regions span residues 268-347 and 416-458; these read AAAR…IPDE and GFFT…AKKK. 2 stretches are compositionally biased toward acidic residues: residues 275 to 285 and 293 to 309; these read AEEEDEEEAEE and EMPD…DEEE. The span at 310–329 shows a compositional bias: basic and acidic residues; the sequence is AERRKKAEAAKKKKAQEKAK. The segment at 410-418 is interaction with PCNA; it reads QQGRLDGFF. Positions 442 to 452 are enriched in basic and acidic residues; that stretch reads RKGEDKAEGSG.

Belongs to the XPG/RAD2 endonuclease family. FEN1 subfamily. As to quaternary structure, interacts with PCNA. Three molecules of FEN1 bind to one PCNA trimer with each molecule binding to one PCNA monomer. PCNA stimulates the nuclease activity without altering cleavage specificity. The cofactor is Mg(2+). In terms of processing, phosphorylated. Phosphorylation upon DNA damage induces relocalization to the nuclear plasma.

It localises to the nucleus. The protein localises to the nucleolus. It is found in the nucleoplasm. Its subcellular location is the mitochondrion. Its function is as follows. Structure-specific nuclease with 5'-flap endonuclease and 5'-3' exonuclease activities involved in DNA replication and repair. During DNA replication, cleaves the 5'-overhanging flap structure that is generated by displacement synthesis when DNA polymerase encounters the 5'-end of a downstream Okazaki fragment. It enters the flap from the 5'-end and then tracks to cleave the flap base, leaving a nick for ligation. Also involved in the long patch base excision repair (LP-BER) pathway, by cleaving within the apurinic/apyrimidinic (AP) site-terminated flap. Acts as a genome stabilization factor that prevents flaps from equilibrating into structures that lead to duplications and deletions. Also possesses 5'-3' exonuclease activity on nicked or gapped double-stranded DNA, and exhibits RNase H activity. Also involved in replication and repair of rDNA and in repairing mitochondrial DNA. The sequence is that of Flap endonuclease 1 from Coprinopsis cinerea (strain Okayama-7 / 130 / ATCC MYA-4618 / FGSC 9003) (Inky cap fungus).